The chain runs to 183 residues: Endoribonuclease YbeY (183 aa).

Zn(2+)-binding residues include histidine 118, histidine 122, and histidine 128. Residues glutamate 156–histidine 183 are disordered.

It belongs to the endoribonuclease YbeY family. It depends on Zn(2+) as a cofactor.

It localises to the cytoplasm. Single strand-specific metallo-endoribonuclease involved in late-stage 70S ribosome quality control and in maturation of the 3' terminus of the 16S rRNA. The protein is Endoribonuclease YbeY of Saccharopolyspora erythraea (strain ATCC 11635 / DSM 40517 / JCM 4748 / NBRC 13426 / NCIMB 8594 / NRRL 2338).